Consider the following 61-residue polypeptide: Large ribosomal subunit protein uL30 (61 aa).

This sequence belongs to the universal ribosomal protein uL30 family. As to quaternary structure, part of the 50S ribosomal subunit.

This Fervidobacterium nodosum (strain ATCC 35602 / DSM 5306 / Rt17-B1) protein is Large ribosomal subunit protein uL30.